A 348-amino-acid chain; its full sequence is tRNA N6-adenosine threonylcarbamoyltransferase (348 aa).

Positions 115 and 119 each coordinate Fe cation. Residues leucine 138–glycine 142, aspartate 171, glycine 184, and asparagine 276 contribute to the substrate site. Aspartate 304 lines the Fe cation pocket.

The protein belongs to the KAE1 / TsaD family. Fe(2+) serves as cofactor.

The protein localises to the cytoplasm. It carries out the reaction L-threonylcarbamoyladenylate + adenosine(37) in tRNA = N(6)-L-threonylcarbamoyladenosine(37) in tRNA + AMP + H(+). Functionally, required for the formation of a threonylcarbamoyl group on adenosine at position 37 (t(6)A37) in tRNAs that read codons beginning with adenine. Is involved in the transfer of the threonylcarbamoyl moiety of threonylcarbamoyl-AMP (TC-AMP) to the N6 group of A37, together with TsaE and TsaB. TsaD likely plays a direct catalytic role in this reaction. The sequence is that of tRNA N6-adenosine threonylcarbamoyltransferase from Xylella fastidiosa (strain 9a5c).